Consider the following 119-residue polypeptide: Thioredoxin H4 (119 aa).

The region spanning 2–115 (AAEEGQVIGC…LQAKIVKHTG (114 aa)) is the Thioredoxin domain. Catalysis depends on nucleophile residues cysteine 40 and cysteine 43. Cysteine 40 and cysteine 43 are joined by a disulfide.

This sequence belongs to the thioredoxin family. Plant H-type subfamily. In terms of assembly, interacts with MDH1.

The protein resides in the cytoplasm. In terms of biological role, thiol-disulfide oxidoreductase probably involved in the redox regulation of a number of cytosolic enzymes. Possesses insulin disulfide bonds reducing activity. The chain is Thioredoxin H4 (TRX4) from Arabidopsis thaliana (Mouse-ear cress).